A 142-amino-acid polypeptide reads, in one-letter code: Hemoglobin subunit alpha (142 aa).

A Globin domain is found at 2–142; that stretch reads VLSGEDKSNI…VSTVLTSKYR (141 aa). At serine 4 the chain carries Phosphoserine. An N6-succinyllysine mark is found at lysine 8 and lysine 12. N6-acetyllysine; alternate is present on lysine 17. Lysine 17 is modified (N6-succinyllysine; alternate). At tyrosine 25 the chain carries Phosphotyrosine. At serine 36 the chain carries Phosphoserine. An N6-succinyllysine modification is found at lysine 41. The residue at position 50 (serine 50) is a Phosphoserine. Histidine 59 is an O2 binding site. Histidine 88 is a heme b binding site. Serine 103 bears the Phosphoserine mark. The residue at position 109 (threonine 109) is a Phosphothreonine. A phosphoserine mark is found at serine 112, serine 125, and serine 132. Phosphothreonine is present on residues threonine 135 and threonine 138. Serine 139 is subject to Phosphoserine.

The protein belongs to the globin family. Heterotetramer of two alpha chains and two beta chains. As to expression, red blood cells.

In terms of biological role, involved in oxygen transport from the lung to the various peripheral tissues. Its function is as follows. Hemopressin acts as an antagonist peptide of the cannabinoid receptor CNR1. Hemopressin-binding efficiently blocks cannabinoid receptor CNR1 and subsequent signaling. The chain is Hemoglobin subunit alpha (Hba) from Mus musculus (Mouse).